We begin with the raw amino-acid sequence, 318 residues long: Formimidoylglutamase (318 aa).

Mn(2+) is bound by residues His130, Asp155, His157, Asp159, Asp246, and Asp248.

The protein belongs to the arginase family. Mn(2+) is required as a cofactor.

It catalyses the reaction N-formimidoyl-L-glutamate + H2O = formamide + L-glutamate. It participates in amino-acid degradation; L-histidine degradation into L-glutamate; L-glutamate from N-formimidoyl-L-glutamate (hydrolase route): step 1/1. Its function is as follows. Catalyzes the conversion of N-formimidoyl-L-glutamate to L-glutamate and formamide. The sequence is that of Formimidoylglutamase from Klebsiella pneumoniae (strain 342).